Reading from the N-terminus, the 290-residue chain is Nucleotide-binding protein BAV3158 (290 aa).

9–16 (GISGSGKS) serves as a coordination point for ATP. Residue 58–61 (DVRS) participates in GTP binding.

Belongs to the RapZ-like family.

Displays ATPase and GTPase activities. This Bordetella avium (strain 197N) protein is Nucleotide-binding protein BAV3158.